The following is a 59-amino-acid chain: Large ribosomal subunit protein bL32 (59 aa).

The protein belongs to the bacterial ribosomal protein bL32 family.

This Lactiplantibacillus plantarum (strain ATCC BAA-793 / NCIMB 8826 / WCFS1) (Lactobacillus plantarum) protein is Large ribosomal subunit protein bL32.